The primary structure comprises 254 residues: RNA polymerase sigma-D factor (254 aa).

Residues Asp-54–Leu-67 carry the Polymerase core binding motif. The segment at residues Leu-220–Ser-239 is a DNA-binding region (H-T-H motif).

As to quaternary structure, monomer. Interacts transiently with the RNAP core.

Its function is as follows. Sigma factors are initiation factors that promote the attachment of RNA polymerase (RNAP) to specific initiation sites and are then released. This alternative sigma factor is required for the transcription of the flagellin and motility genes as well as for wild-type chemotaxis. Associates with the RNAP core during all growth phases with a peak at the transition to stationary phase. The protein is RNA polymerase sigma-D factor (sigD) of Bacillus subtilis (strain 168).